A 524-amino-acid polypeptide reads, in one-letter code: Mitochondrial-processing peptidase subunit alpha (524 aa).

The N-terminal 32 residues, 1 to 32 (MATAVWAAARLLRGSAALCARPKFGSPAHRRF), are a transit peptide targeting the mitochondrion. N6-succinyllysine is present on Lys-63.

It belongs to the peptidase M16 family. Heterodimer of PMPCA (alpha) and PMPCB (beta) subunits, forming the mitochondrial processing protease (MPP) in which PMPCA is involved in substrate recognition and binding and PMPCB is the catalytic subunit.

The protein resides in the mitochondrion matrix. The protein localises to the mitochondrion inner membrane. Its function is as follows. Substrate recognition and binding subunit of the essential mitochondrial processing protease (MPP), which cleaves the mitochondrial sequence off newly imported precursors proteins. This chain is Mitochondrial-processing peptidase subunit alpha (Pmpca), found in Rattus norvegicus (Rat).